A 539-amino-acid chain; its full sequence is Tetracenomycin B2 monooxygenase-dioxygenase (539 aa).

Residues Leu-15, Glu-35, Gln-128, and Leu-152 each coordinate FAD. The Proton acceptor role is filled by Tyr-231. Position 313 (Asp-313) interacts with FAD.

This sequence belongs to the PheA/TfdB FAD monooxygenase family. Requires FAD as cofactor.

The catalysed reaction is tetracenomycin B2 + 2 NADPH + 2 O2 + 2 H(+) = 8-demethyltetracenomycin C + 2 NADP(+) + H2O. It carries out the reaction tetracenomycin A2 + 2 NADPH + 2 O2 + 2 H(+) = tetracenomycin C + 2 NADP(+) + H2O. Its pathway is antibiotic biosynthesis. Involved in the biosynthesis of elloramycin, an antitumor polyketide. In vivo, probably catalyzes the triple hydroxylation of 8-demethyltetracenomycin A2 (tetracenomycin B2) at positions C-4, C-4a and C-12a to give 8-demethyltetracenomycin C (8-DMTC). In vitro, catalyzes the triple hydroxylation of tetracenomycin A2 (TCM A2) to give tetracenomycin C (TCM C). Uses NADPH as an electron donor and requires molecular O(2). The protein is Tetracenomycin B2 monooxygenase-dioxygenase of Streptomyces olivaceus.